The following is a 77-amino-acid chain: Apelin (77 aa).

The first 22 residues, M1 to A22, serve as a signal peptide directing secretion. The tract at residues S21 to F77 is disordered. Residues G59 to H71 are compositionally biased toward basic residues.

This sequence belongs to the apelin family.

It localises to the secreted. The protein localises to the extracellular space. Functionally, peptide hormone that functions as endogenous ligand for the G-protein-coupled apelin receptor (aplnra and/or aplnrb), that plays a role in cadiovascular homeostasis. Functions as a balanced agonist activating both G(i) protein pathway and beta-arrestin pathway of APLNR. Downstream G proteins activation, apelin can inhibit cAMP production and activate key intracellular effectors such as ERKs. On the other hand, APLNR activation induces beta-arrestin recruitment to the membrane leading to desensitization and internalization of the receptor. Apelin blunts cardiac hypertrophic induction from APLNR on response to pathological stimuli, but also induces myocardial hypertrophy under normal conditions. Involved in the regulation of cardiac precursor cell movements during gastrulation and heart morphogenesis. Plays a role in early coronary blood vessels formation. Mediates myocardial contractility in an ERK1/2-dependent manner. May also have a role in the central control of body fluid homeostasis. In Danio rerio (Zebrafish), this protein is Apelin.